The sequence spans 159 residues: Growth arrest and DNA damage-inducible protein GADD45 gamma (159 aa).

The segment at 43-86 (VYESAKVLNVDPDNVTFCVLAAGEEDEGDIALQIHFTLIQAFCC) is homodimerization.

It belongs to the GADD45 family. In terms of assembly, undergoes concentration-dependent homodimerization, which is required for growth inhibititory activity and enhances interaction with PCNA. Interacts with GADD45GIP1. Interacts with PCNA.

In terms of biological role, involved in the regulation of growth and apoptosis. Mediates activation of stress-responsive MTK1/MEKK4 MAPKKK. This is Growth arrest and DNA damage-inducible protein GADD45 gamma (GADD45G) from Homo sapiens (Human).